Here is a 252-residue protein sequence, read N- to C-terminus: dITP/XTP pyrophosphatase (252 aa).

7 to 12 (THNEGK) serves as a coordination point for substrate. The active-site Proton acceptor is Asp74. Asp74 is a Mg(2+) binding site. Substrate is bound by residues Ser75 and 193 to 196 (FGYD). The interval 202 to 229 (DDQPAGRVSTEPDHEGEPLTSAEMTPAE) is disordered. Substrate-binding positions include Lys230 and 235–236 (HR).

Belongs to the HAM1 NTPase family. As to quaternary structure, homodimer. The cofactor is Mg(2+).

It carries out the reaction XTP + H2O = XMP + diphosphate + H(+). It catalyses the reaction dITP + H2O = dIMP + diphosphate + H(+). The enzyme catalyses ITP + H2O = IMP + diphosphate + H(+). Pyrophosphatase that catalyzes the hydrolysis of nucleoside triphosphates to their monophosphate derivatives, with a high preference for the non-canonical purine nucleotides XTP (xanthosine triphosphate), dITP (deoxyinosine triphosphate) and ITP. Seems to function as a house-cleaning enzyme that removes non-canonical purine nucleotides from the nucleotide pool, thus preventing their incorporation into DNA/RNA and avoiding chromosomal lesions. This Bifidobacterium longum (strain NCC 2705) protein is dITP/XTP pyrophosphatase.